The chain runs to 765 residues: E3 ubiquitin-protein ligase SlrP (765 aa).

An interaction with target proteins region spans residues 1–451 (MFNITNIQST…VDYQGPRVLF (451 aa)). LRR repeat units lie at residues 200–219 (QITT…ENLQ), 221–242 (NIKT…LPDT), 243–262 (IQEM…RLPS), 263–284 (ALQS…LPEE), 285–305 (LRYL…LPSG), 306–325 (ITHL…TLPP), 326–346 (GLKT…SLPP), 347–368 (ELQV…LPPT), 369–389 (ITTL…LPAA), and 390–410 (LQIM…LPHF). Residues 452–461 (AMGDFSIVRV) form a linker region. The tract at residues 462 to 765 (TRPLHQAVQG…VSSLMSAYWR (304 aa)) is E3 ubiquitin-protein ligase catalytic domain. The NEL domain maps to 464–758 (PLHQAVQGWL…NILLKKEVSS (295 aa)). C546 acts as the Glycyl thioester intermediate in catalysis.

This sequence belongs to the LRR-containing bacterial E3 ligase family. In terms of assembly, interacts with host TXN. Ubiquitinated in the presence of host E1 ubiquitin-activating enzyme, E2 ubiquitin-conjugating enzyme and ubiquitin.

The protein localises to the secreted. Its subcellular location is the host cytoplasm. It carries out the reaction S-ubiquitinyl-[E2 ubiquitin-conjugating enzyme]-L-cysteine + [acceptor protein]-L-lysine = [E2 ubiquitin-conjugating enzyme]-L-cysteine + N(6)-ubiquitinyl-[acceptor protein]-L-lysine.. Its activity is regulated as follows. Binding to TXN is inhibited by hydrogen peroxide in vitro. Effector proteins function to alter host cell physiology and promote bacterial survival in host tissues. This protein is an E3 ubiquitin ligase that interferes with host's ubiquitination pathway. Can ubiquitinate both ubiquitin and host TXN (thioredoxin). Leads to significant decrease of thioredoxin activity and increase of host cell death. This is E3 ubiquitin-protein ligase SlrP (slrP) from Salmonella typhimurium (strain LT2 / SGSC1412 / ATCC 700720).